We begin with the raw amino-acid sequence, 316 residues long: Ornithine carbamoyltransferase (316 aa).

Carbamoyl phosphate-binding positions include 57–60 (STRT), Gln-84, Arg-108, and 135–138 (HPCQ). L-ornithine contacts are provided by residues Asn-166, Asp-230, and 234–235 (SM). Residues 269–270 (CL) and Arg-297 each bind carbamoyl phosphate.

The protein belongs to the aspartate/ornithine carbamoyltransferase superfamily. OTCase family.

It localises to the cytoplasm. The catalysed reaction is carbamoyl phosphate + L-ornithine = L-citrulline + phosphate + H(+). Its pathway is amino-acid biosynthesis; L-arginine biosynthesis; L-arginine from L-ornithine and carbamoyl phosphate: step 1/3. Its function is as follows. Reversibly catalyzes the transfer of the carbamoyl group from carbamoyl phosphate (CP) to the N(epsilon) atom of ornithine (ORN) to produce L-citrulline. The sequence is that of Ornithine carbamoyltransferase from Bacillus cereus (strain ZK / E33L).